A 76-amino-acid polypeptide reads, in one-letter code: ATP synthase subunit 9, mitochondrial (76 aa).

The next 2 helical transmembrane spans lie at 14–34 and 52–72; these read IATL…VALI and ILGF…SFLL.

This sequence belongs to the ATPase C chain family. In terms of assembly, F-type ATPases have 2 components, CF(1) - the catalytic core - and CF(0) - the membrane proton channel. CF(1) has five subunits: alpha(3), beta(3), gamma(1), delta(1), epsilon(1). CF(0) has three main subunits: a, b and c.

The protein localises to the mitochondrion membrane. Mitochondrial membrane ATP synthase (F(1)F(0) ATP synthase or Complex V) produces ATP from ADP in the presence of a proton gradient across the membrane which is generated by electron transport complexes of the respiratory chain. F-type ATPases consist of two structural domains, F(1) - containing the extramembraneous catalytic core and F(0) - containing the membrane proton channel, linked together by a central stalk and a peripheral stalk. During catalysis, ATP synthesis in the catalytic domain of F(1) is coupled via a rotary mechanism of the central stalk subunits to proton translocation. Part of the complex F(0) domain. A homomeric c-ring of probably 10 subunits is part of the complex rotary element. The polypeptide is ATP synthase subunit 9, mitochondrial (ATP9) (Candida albicans (strain SC5314 / ATCC MYA-2876) (Yeast)).